A 324-amino-acid polypeptide reads, in one-letter code: Protoheme IX farnesyltransferase (324 aa).

The next 9 helical transmembrane spans lie at 31 to 51, 56 to 76, 105 to 125, 126 to 146, 153 to 173, 181 to 201, 214 to 234, 238 to 258, and 285 to 305; these read LILL…SGQV, FLTT…INCI, VFAA…ANLL, SACL…YWLK, IVIG…AVTG, VLFA…AMMI, PVVN…LLLL, LLLV…AIVL, and FSIL…LPWT.

Belongs to the UbiA prenyltransferase family. Protoheme IX farnesyltransferase subfamily.

The protein resides in the cell inner membrane. It catalyses the reaction heme b + (2E,6E)-farnesyl diphosphate + H2O = Fe(II)-heme o + diphosphate. It participates in porphyrin-containing compound metabolism; heme O biosynthesis; heme O from protoheme: step 1/1. Its function is as follows. Converts heme B (protoheme IX) to heme O by substitution of the vinyl group on carbon 2 of heme B porphyrin ring with a hydroxyethyl farnesyl side group. The protein is Protoheme IX farnesyltransferase of Acaryochloris marina (strain MBIC 11017).